A 213-amino-acid polypeptide reads, in one-letter code: Orotate phosphoribosyltransferase (213 aa).

Lys-26 is a 5-phospho-alpha-D-ribose 1-diphosphate binding site. An orotate-binding site is contributed by 34–35 (FF). 5-phospho-alpha-D-ribose 1-diphosphate contacts are provided by residues 72-73 (YK), Arg-98, Lys-99, Lys-102, and 123-131 (DDVISAGTS). 2 residues coordinate orotate: Ser-127 and Arg-155.

It belongs to the purine/pyrimidine phosphoribosyltransferase family. PyrE subfamily. As to quaternary structure, homodimer. Mg(2+) is required as a cofactor.

The catalysed reaction is orotidine 5'-phosphate + diphosphate = orotate + 5-phospho-alpha-D-ribose 1-diphosphate. It functions in the pathway pyrimidine metabolism; UMP biosynthesis via de novo pathway; UMP from orotate: step 1/2. In terms of biological role, catalyzes the transfer of a ribosyl phosphate group from 5-phosphoribose 1-diphosphate to orotate, leading to the formation of orotidine monophosphate (OMP). This is Orotate phosphoribosyltransferase from Neisseria gonorrhoeae (strain ATCC 700825 / FA 1090).